A 183-amino-acid chain; its full sequence is Large ribosomal subunit protein uL5 (183 aa).

This sequence belongs to the universal ribosomal protein uL5 family. In terms of assembly, part of the 50S ribosomal subunit; part of the 5S rRNA/L5/L18/L25 subcomplex. Contacts the 5S rRNA and the P site tRNA. Forms a bridge to the 30S subunit in the 70S ribosome.

Functionally, this is one of the proteins that bind and probably mediate the attachment of the 5S RNA into the large ribosomal subunit, where it forms part of the central protuberance. In the 70S ribosome it contacts protein S13 of the 30S subunit (bridge B1b), connecting the 2 subunits; this bridge is implicated in subunit movement. Contacts the P site tRNA; the 5S rRNA and some of its associated proteins might help stabilize positioning of ribosome-bound tRNAs. This chain is Large ribosomal subunit protein uL5, found in Fusobacterium nucleatum subsp. nucleatum (strain ATCC 25586 / DSM 15643 / BCRC 10681 / CIP 101130 / JCM 8532 / KCTC 2640 / LMG 13131 / VPI 4355).